Reading from the N-terminus, the 159-residue chain is Aspartate carbamoyltransferase regulatory chain (159 aa).

Zn(2+) is bound by residues C113, C118, C142, and C145.

The protein belongs to the PyrI family. In terms of assembly, contains catalytic and regulatory chains. It depends on Zn(2+) as a cofactor.

In terms of biological role, involved in allosteric regulation of aspartate carbamoyltransferase. This is Aspartate carbamoyltransferase regulatory chain from Saccharolobus islandicus (strain Y.N.15.51 / Yellowstone #2) (Sulfolobus islandicus).